The following is a 357-amino-acid chain: Peptide chain release factor 1 (357 aa).

Position 233 is an N5-methylglutamine (glutamine 233).

Belongs to the prokaryotic/mitochondrial release factor family. In terms of processing, methylated by PrmC. Methylation increases the termination efficiency of RF1.

It is found in the cytoplasm. Its function is as follows. Peptide chain release factor 1 directs the termination of translation in response to the peptide chain termination codons UAG and UAA. In Leuconostoc citreum (strain KM20), this protein is Peptide chain release factor 1.